Consider the following 761-residue polypeptide: Pleckstrin homology domain-containing family M member 3 (761 aa).

S132 is subject to Phosphoserine. PH domains lie at 211–308 and 361–456; these read NILK…EVVH and NILK…IAAN. The Phorbol-ester/DAG-type zinc finger occupies 669-722; sequence SHVYSCSLCSQKGFICEICNNGEILYPFEDISTSRCESCGAVFHSECKEKSVPC.

Interacts with AKT1.

It is found in the cytoplasm. The protein resides in the golgi apparatus. The protein localises to the cell membrane. Its function is as follows. Involved in skeletal muscle differentiation. May act as a scaffold protein for AKT1 during muscle differentiation. The chain is Pleckstrin homology domain-containing family M member 3 from Homo sapiens (Human).